The primary structure comprises 198 residues: NADH-quinone oxidoreductase subunit C (198 aa).

This sequence belongs to the complex I 30 kDa subunit family. In terms of assembly, NDH-1 is composed of 14 different subunits. Subunits NuoB, C, D, E, F, and G constitute the peripheral sector of the complex.

It localises to the cell inner membrane. It carries out the reaction a quinone + NADH + 5 H(+)(in) = a quinol + NAD(+) + 4 H(+)(out). NDH-1 shuttles electrons from NADH, via FMN and iron-sulfur (Fe-S) centers, to quinones in the respiratory chain. The immediate electron acceptor for the enzyme in this species is believed to be ubiquinone. Couples the redox reaction to proton translocation (for every two electrons transferred, four hydrogen ions are translocated across the cytoplasmic membrane), and thus conserves the redox energy in a proton gradient. This chain is NADH-quinone oxidoreductase subunit C, found in Chromobacterium violaceum (strain ATCC 12472 / DSM 30191 / JCM 1249 / CCUG 213 / NBRC 12614 / NCIMB 9131 / NCTC 9757 / MK).